Reading from the N-terminus, the 440-residue chain is Cysteine proteinase (440 aa).

The N-terminal stretch at Met1–Val60 is a signal peptide. A propeptide spans Val61–Thr229 (activation peptide). Residues Val166–Lys182 form an involved in processing to yield active enzymes region. N-linked (GlcNAc...) asparagine glycosylation is present at Asn206. A disulfide bridge connects residues Cys250 and Cys291. Active-site residues include Cys253, His382, and Asn404.

The protein belongs to the peptidase C1 family.

The protein is Cysteine proteinase of Theileria parva (East coast fever infection agent).